The primary structure comprises 250 residues: tRNA pseudouridine synthase A (250 aa).

The Nucleophile role is filled by aspartate 53. Tyrosine 111 lines the substrate pocket.

This sequence belongs to the tRNA pseudouridine synthase TruA family. As to quaternary structure, homodimer.

The enzyme catalyses uridine(38/39/40) in tRNA = pseudouridine(38/39/40) in tRNA. Functionally, formation of pseudouridine at positions 38, 39 and 40 in the anticodon stem and loop of transfer RNAs. This Streptococcus uberis (strain ATCC BAA-854 / 0140J) protein is tRNA pseudouridine synthase A.